We begin with the raw amino-acid sequence, 163 residues long: MRRLLIPLALWLGAVGVGVAELTEAQRRGLQVALEEFHKHPPVQWAFQETSVESAVDTPFPAGIFVRLEFKLQQTSCRKRDWKKPECKVRPNGRKRKCLACIKLGSEDKVLGRLVHCPIETQVLREPEEHQETQCIRVQRAGEDPHSFYFPGQFAFSKALPRS.

The first 20 residues, methionine 1–alanine 20, serve as a signal peptide directing secretion. Cystine bridges form between cysteine 77–cysteine 87, cysteine 98–cysteine 117, and cysteine 101–cysteine 135. Residues lysine 158–serine 163 constitute a propeptide that is removed on maturation.

In terms of processing, secreted in an inactive precursor form, prochemerin, which is proteolytically processed by a variety of extracellular proteases to generate forms with differing levels of bioactivity. For example, the removal of six amino acids results in chemerin-157, which exhibits the highest activity, while removal of seven amino acids results in chemerin-156 which has slightly less activity. Some proteases are able to cleave at more than one site and chemerin forms may be sequentially processed by different enzymes to modulate activity levels. The coordinated expression and activity of chemerin-modifying enzymes is essential for regulating its bioactivation, inactivation and, consequently, biological function. Cathepsin G cleaves seven C-terminal amino acids from prochemerin (chemerin-156), elastase is able to cleave six (chemerin-157), eight (chemerin-155) or eleven (chemerin-152), plasmin cleaves five amino acids (chemerin-158), and tryptase cleaves five (chemerin-158) or eight (chemerin-155). Multiple cleavages might be required to fully activate chemerin, with an initial tryptase cleavage resulting in chemerin with low activity (chemerin-158), and a second cleavage by carboxypeptidase N or B producing highly active chemerin (chemerin-157).

Its subcellular location is the secreted. Adipocyte-secreted protein (adipokine) that regulates adipogenesis, metabolism and inflammation through activation of the chemokine-like receptor 1 (CMKLR1). Also acts as a ligand for CMKLR2. Can also bind to C-C chemokine receptor-like 2 (CCRL2), but with a lower affinity than it does to CMKLR1 or CMKLR2. Positively regulates adipocyte differentiation, modulates the expression of adipocyte genes involved in lipid and glucose metabolism and might play a role in angiogenesis, a process essential for the expansion of white adipose tissue. Also acts as a pro-inflammatory adipokine, causing an increase in secretion of pro-inflammatory and prodiabetic adipokines, which further impair adipose tissue metabolic function and have negative systemic effects including impaired insulin sensitivity, altered glucose and lipid metabolism, and a decrease in vascular function in other tissues. Can have both pro- and anti-inflammatory properties depending on the modality of enzymatic cleavage by different classes of proteases. Acts as a chemotactic factor for leukocyte populations expressing CMKLR1, particularly immature plasmacytoid dendritic cells, but also immature myeloid DCs, macrophages and natural killer cells. Exerts an anti-inflammatory role by preventing TNF/TNFA-induced VCAM1 expression and monocytes adhesion in vascular endothelial cells. The effect is mediated via inhibiting activation of NF-kappa-B and CRK/p38 through stimulation of AKT1/NOS3 signaling and nitric oxide production. Exhibits an antimicrobial function in the skin. In Pongo abelii (Sumatran orangutan), this protein is Retinoic acid receptor responder protein 2 (RARRES2).